We begin with the raw amino-acid sequence, 107 residues long: Iron-binding protein IscA (107 aa).

3 residues coordinate Fe cation: Cys-35, Cys-99, and Cys-101.

It belongs to the HesB/IscA family. Homodimer; may form tetramers and higher multimers. Requires Fe cation as cofactor.

Functionally, is able to transfer iron-sulfur clusters to apo-ferredoxin. Multiple cycles of [2Fe2S] cluster formation and transfer are observed, suggesting that IscA acts catalytically. Recruits intracellular free iron so as to provide iron for the assembly of transient iron-sulfur cluster in IscU in the presence of IscS, L-cysteine and the thioredoxin reductase system TrxA/TrxB. This Yersinia pestis bv. Antiqua (strain Angola) protein is Iron-binding protein IscA.